We begin with the raw amino-acid sequence, 149 residues long: Transcriptional repressor NrdR (149 aa).

The segment at 3–34 is a zinc-finger region; sequence CPFCAAEETKVVDSRLAADGYQIRRRRECTSC. One can recognise an ATP-cone domain in the interval 49–139; it reads PYVIKNNGNR…VYLSFDDIEE (91 aa).

This sequence belongs to the NrdR family. The cofactor is Zn(2+).

Negatively regulates transcription of bacterial ribonucleotide reductase nrd genes and operons by binding to NrdR-boxes. The sequence is that of Transcriptional repressor NrdR from Actinobacillus pleuropneumoniae serotype 3 (strain JL03).